A 490-amino-acid polypeptide reads, in one-letter code: tRNA-2-methylthio-N(6)-dimethylallyladenosine synthase (490 aa).

Residues 37–154 (KKVYIATQGC…LPELYDKSTT (118 aa)) enclose the MTTase N-terminal domain. Residues Cys46, Cys83, Cys117, Cys198, Cys202, and Cys205 each coordinate [4Fe-4S] cluster. The Radical SAM core domain maps to 184-416 (KVEGYRAFVS…QKVIRDSTLK (233 aa)). The region spanning 419 to 487 (EEMVGKTLRV…PHMVRGELVD (69 aa)) is the TRAM domain.

Belongs to the methylthiotransferase family. MiaB subfamily. As to quaternary structure, monomer. The cofactor is [4Fe-4S] cluster.

It localises to the cytoplasm. It catalyses the reaction N(6)-dimethylallyladenosine(37) in tRNA + (sulfur carrier)-SH + AH2 + 2 S-adenosyl-L-methionine = 2-methylsulfanyl-N(6)-dimethylallyladenosine(37) in tRNA + (sulfur carrier)-H + 5'-deoxyadenosine + L-methionine + A + S-adenosyl-L-homocysteine + 2 H(+). Functionally, catalyzes the methylthiolation of N6-(dimethylallyl)adenosine (i(6)A), leading to the formation of 2-methylthio-N6-(dimethylallyl)adenosine (ms(2)i(6)A) at position 37 in tRNAs that read codons beginning with uridine. This is tRNA-2-methylthio-N(6)-dimethylallyladenosine synthase from Psychrobacter sp. (strain PRwf-1).